A 316-amino-acid polypeptide reads, in one-letter code: Adenine deaminase (316 aa).

Zn(2+) is bound by residues histidine 14, histidine 16, and histidine 194. Glutamate 197 functions as the Proton donor in the catalytic mechanism. Aspartate 275 serves as a coordination point for Zn(2+). Aspartate 276 contacts substrate.

The protein belongs to the metallo-dependent hydrolases superfamily. Adenosine and AMP deaminases family. Adenine deaminase type 2 subfamily. Zn(2+) is required as a cofactor.

It carries out the reaction adenine + H2O + H(+) = hypoxanthine + NH4(+). Functionally, catalyzes the hydrolytic deamination of adenine to hypoxanthine. Plays an important role in the purine salvage pathway and in nitrogen catabolism. This chain is Adenine deaminase, found in Stutzerimonas stutzeri (strain A1501) (Pseudomonas stutzeri).